Consider the following 156-residue polypeptide: Jun dimerization protein 2 (156 aa).

Residues 56-95 (KRPFDAIKSEDDDDDERKKRRREKNKVAAARCRNRKKERT) are disordered. A bZIP domain is found at 70 to 133 (DERKKRRREK…QQLIVMLNLH (64 aa)). Positions 72 to 94 (RKKRRREKNKVAAARCRNRKKER) are basic motif. Residues 98 to 126 (LQKESERLEMLNSDLKSQIEELKSERQQL) form a leucine-zipper region.

Belongs to the bZIP family. ATF subfamily.

The protein resides in the nucleus. Its function is as follows. Component of the AP-1 transcription factor that represses transactivation mediated by the Jun family of proteins. This Danio rerio (Zebrafish) protein is Jun dimerization protein 2 (jdp2).